A 210-amino-acid polypeptide reads, in one-letter code: Thymidylate kinase (210 aa).

Residue 10 to 17 (GLEGAGKS) coordinates ATP.

This sequence belongs to the thymidylate kinase family.

The enzyme catalyses dTMP + ATP = dTDP + ADP. Its function is as follows. Phosphorylation of dTMP to form dTDP in both de novo and salvage pathways of dTTP synthesis. This Haemophilus influenzae (strain PittEE) protein is Thymidylate kinase.